A 106-amino-acid chain; its full sequence is HIG1 domain family member 2A (106 aa).

Ala2 is subject to N-acetylalanine. In terms of domain architecture, HIG1 spans 20 to 106 (VIEGFSPTVY…LAASAMKSQA (87 aa)). The next 2 membrane-spanning stretches (helical) occupy residues 47–67 (PMVP…LYCF) and 83–103 (IAAQ…SAMK).

As to quaternary structure, associates with cytochrome c oxidase (COX, complex IV); proposed complex component.

The protein localises to the mitochondrion membrane. It is found in the mitochondrion inner membrane. In terms of biological role, proposed subunit of cytochrome c oxidase (COX, complex IV), which is the terminal component of the mitochondrial respiratory chain that catalyzes the reduction of oxygen to water. May be involved in cytochrome c oxidase activity. May play a role in the assembly of respiratory supercomplexes. The chain is HIG1 domain family member 2A (Higd2a) from Mus musculus (Mouse).